Reading from the N-terminus, the 550-residue chain is MTVQSKLQGRGKFKKRFFRAGQQVPRPTLELSSVWLSKIFYNPEQHHNKQKMIESGITTRMSGIHENPGQSHHTSAQDYRLLTTDPSQLKDELPGDLQSLSWLTSVDVPRLQQIGGGRPDFTSSAQSSLLERQTAQLNSMTVAGGAGSAIHLQSEMQHSPLAINSMPQFSPGFPCAASVYQTAPQQVLTFTQANQQCSPGGLYGNYNSQNLFPQPRITAHSQDLQPKCFPKPIYSYSCLIAMALKNSKTGSLPVSEIYSFMKEHFPYFKTAPDGWKNSVRHNLSLNKCFEKVENKMSGSSRKGCLWALNPAKIDKMEEEMQKWKRKDLPAIRRSMANPDELDKLITDRPESCRQKSVDPGMTRLPSCPPGQTLPLAAQMQPQPVVTLSLQCLPMHQHLQLQLQNQSRLAPSSPAPAQTPPLHTVPDMTNSSLPQHPAKQHTDFYTVHTDVNSEVDALDPSIMDFAWQGNLWEEMKDDSFNLEALGTLSNSPLRLSDCDLDTSSVTPVSSAGGLPYPDLQVTGLYSSYSAIDALSNQYMNTQGGTKPIVLL.

Residues 231–327 (KPIYSYSCLI…EEMQKWKRKD (97 aa)) constitute a DNA-binding region (fork-head). A compositionally biased stretch (low complexity) spans 402 to 411 (LQNQSRLAPS). Residues 402–437 (LQNQSRLAPSSPAPAQTPPLHTVPDMTNSSLPQHPA) form a disordered region.

Isoform 1 is expressed mainly in adult thymus. Isoform 2 is detected in adult skin. Isoform 3 is expressed in adult brain and embryo. Prominent expression sites include the olfactory placode, the basal layer of the olfactory epithelium, the neuroepithelium of the developing retina, the germinal zone of the differentiated eye, regions of motoneuron development in the neural tube and periventricular regions of the brain.

The protein resides in the nucleus. Transcription factor essential for neural and some non-neural tissues development. Binds to an 11-bp consensus sequence containing the invariant tetranucleotide 5'-ACGC-3'. During development of the central nervous system, required to specify the amacrine and horizontal cell fates from multipotent retinal progenitors while suppressing the alternative photoreceptor cell fates. Drives commitment of p2 progenitors to the V2b interneuron fates during spinal cord neurogenesis. In development of non-neural tissues, plays an essential role in the specification of the atrioventricular canal. This chain is Forkhead box protein N4 (foxn4), found in Danio rerio (Zebrafish).